A 525-amino-acid chain; its full sequence is NGFI-A-binding protein 2 (525 aa).

The tract at residues 1–22 is disordered; it reads MHRAPSPTAEQPPGGGDSARRT. The residue at position 6 (Ser6) is a Phosphoserine. Residues 35 to 113 are NCD1; that stretch reads ALPRTLGELQ…REWATNPGLF (79 aa). Residues 135 to 237 are disordered; sequence GTRKGSMSNG…GGTGGGPDRL (103 aa). A phosphoserine mark is found at Ser157, Ser159, Ser162, and Ser171. The span at 212 to 234 shows a compositional bias: gly residues; the sequence is AGGGVPEGTGAGGLAAGGTGGGP. Positions 267–356 are NCD2; that stretch reads LLKLNKKLAR…SRQVARESTY (90 aa). The interval 353–384 is necessary for nuclear localization; it reads ESTYLSSLKGSRLHPEELGGPPLKKLKQEVGE. Lys379 is covalently cross-linked (Glycyl lysine isopeptide (Lys-Gly) (interchain with G-Cter in SUMO1)). The tract at residues 380-416 is disordered; it reads QEVGEQSHPEIQQPPPGPESYVPPYRPSLEEDSASLS. Ser479 bears the Phosphoserine mark. Positions 502–525 are disordered; the sequence is PGPHPALVEGRRSSVKVEAEASRQ. Over residues 510–525 the composition is skewed to basic and acidic residues; sequence EGRRSSVKVEAEASRQ. Residue Lys517 forms a Glycyl lysine isopeptide (Lys-Gly) (interchain with G-Cter in SUMO1); alternate linkage. Residue Lys517 forms a Glycyl lysine isopeptide (Lys-Gly) (interchain with G-Cter in SUMO2); alternate linkage.

The protein belongs to the NAB family. Homomultimers may associate with EGR1 bound to DNA. Post-translationally, sumoylation by EGR2 represses EGR2 transcriptional activity in hindbrain. In terms of tissue distribution, widely expressed at low levels. Highly expressed in melanoma cell lines.

Its subcellular location is the nucleus. Its function is as follows. Acts as a transcriptional repressor for zinc finger transcription factors EGR1 and EGR2. Isoform 2 lacks repression ability. This Homo sapiens (Human) protein is NGFI-A-binding protein 2 (NAB2).